A 380-amino-acid polypeptide reads, in one-letter code: Phospho-N-acetylmuramoyl-pentapeptide-transferase (380 aa).

A run of 11 helical transmembrane segments spans residues 26–46, 75–95, 98–118, 135–155, 160–180, 183–203, 222–242, 259–279, 283–303, 311–331, and 357–377; these read IVAAGLVSLLIGLLLGPLFIE, MGGALILLAVTVSTLLFADLG, LVWAALLVTLGYGVIGFWDDW, LVLQVLVVLAVYYGLLTDWQP, GFPFLTIGSLVDLHLTLPFVP, LFSPSLGWLYLPFMIFVVVAT, IVSSMTFLALSYVAGATIAGF, LGVFCSAIFGAGIAFLWYNTY, VFMGDVGSLALGGGLGMLAVL, AILHGVFLAETVSVILQVWSF, and KIIVRFWIMSIMLALVALMSL.

It belongs to the glycosyltransferase 4 family. MraY subfamily. It depends on Mg(2+) as a cofactor.

Its subcellular location is the cell inner membrane. It catalyses the reaction UDP-N-acetyl-alpha-D-muramoyl-L-alanyl-gamma-D-glutamyl-meso-2,6-diaminopimeloyl-D-alanyl-D-alanine + di-trans,octa-cis-undecaprenyl phosphate = di-trans,octa-cis-undecaprenyl diphospho-N-acetyl-alpha-D-muramoyl-L-alanyl-D-glutamyl-meso-2,6-diaminopimeloyl-D-alanyl-D-alanine + UMP. It participates in cell wall biogenesis; peptidoglycan biosynthesis. In terms of biological role, catalyzes the initial step of the lipid cycle reactions in the biosynthesis of the cell wall peptidoglycan: transfers peptidoglycan precursor phospho-MurNAc-pentapeptide from UDP-MurNAc-pentapeptide onto the lipid carrier undecaprenyl phosphate, yielding undecaprenyl-pyrophosphoryl-MurNAc-pentapeptide, known as lipid I. In Anaeromyxobacter sp. (strain Fw109-5), this protein is Phospho-N-acetylmuramoyl-pentapeptide-transferase.